The sequence spans 708 residues: Leukotoxin translocation ATP-binding protein LktB (708 aa).

A Peptidase C39 domain is found at 1 to 126; that stretch reads MEANHQRNDL…ACYQGQLILV (126 aa). Residues 155-437 form the ABC transmembrane type-1 domain; that stretch reads FLETLIVSIF…LAQLWQDFQQ (283 aa). 5 helical membrane-spanning segments follow: residues 159 to 179, 192 to 212, 270 to 290, 296 to 316, and 389 to 409; these read LIVS…FQVV, LNII…LSGL, ALTS…MWYY, LVIL…SPIL, and VMVI…LSIG. In terms of domain architecture, ABC transporter spans 469–704; the sequence is ISFKNIRFRY…SNGLYSYLHQ (236 aa). Residue 503-510 participates in ATP binding; sequence GRSGSGKS.

It belongs to the ABC transporter superfamily. Protein-1 exporter (TC 3.A.1.109) family. Homodimer.

The protein localises to the cell inner membrane. It carries out the reaction ATP + H2O + proteinSide 1 = ADP + phosphate + proteinSide 2.. Functionally, part of the ABC transporter complex LktBD involved in leukotoxin export. Transmembrane domains (TMD) form a pore in the inner membrane and the ATP-binding domain (NBD) is responsible for energy generation. This Mannheimia haemolytica (Pasteurella haemolytica) protein is Leukotoxin translocation ATP-binding protein LktB (lktB).